A 386-amino-acid chain; its full sequence is MRIYLVAGELSGDILGAGLMQALKRRHPDAEFRGIGGPRMLAEGMQSLYPLETLSVMGLVEVLKHLPGLIKVRRHLRRDALAWQPDVMIGIDAPDFNLGLERQLRATGMRTVHYVSPSVWAWRQGRVKTIARSVDAMLTFLPFEAAFYARHQVPVAFVGHPLADELPLVNDRQAARTALGLSSTAPLLAVLPGSRGNEIRFLGPTFLDSAVWLRERVPGLQVVIPAASPARRQELEVLLATHPAREFVHLRDGESRQAMTAADAVLLASGTAALEAMLCHRPMVVAYKMAAATHWLAKRMVKTEWISLPNLIAQETLVPELVQEDASCEAIGEALLTWLGDETHRQATETRFAALHATLQRGASERAAEAIDSLVVHGRLPEEPTA.

This sequence belongs to the LpxB family.

The enzyme catalyses a lipid X + a UDP-2-N,3-O-bis[(3R)-3-hydroxyacyl]-alpha-D-glucosamine = a lipid A disaccharide + UDP + H(+). It functions in the pathway bacterial outer membrane biogenesis; LPS lipid A biosynthesis. Condensation of UDP-2,3-diacylglucosamine and 2,3-diacylglucosamine-1-phosphate to form lipid A disaccharide, a precursor of lipid A, a phosphorylated glycolipid that anchors the lipopolysaccharide to the outer membrane of the cell. This is Lipid-A-disaccharide synthase from Chromohalobacter salexigens (strain ATCC BAA-138 / DSM 3043 / CIP 106854 / NCIMB 13768 / 1H11).